Reading from the N-terminus, the 1429-residue chain is Dicer-like protein 2 (1429 aa).

Residues 21-200 form the Helicase ATP-binding domain; that stretch reads MFEASLKGNI…TIEMNLNSVC (180 aa). 34 to 41 serves as a coordination point for ATP; sequence MGTGSGKT. Residues 141-144 carry the DEAH box motif; sequence DEAH. Residues 335–501 enclose the Helicase C-terminal domain; the sequence is ALISFLMSTE…EDRRRTEELR (167 aa). Positions 528-622 constitute a Dicer dsRNA-binding fold domain; sequence AMQHLVHFCD…LPLTKSREFT (95 aa). 2 consecutive RNase III domains span residues 874-1014 and 1056-1250; these read ATRL…IDGG and QENL…VDSG. Mg(2+) contacts are provided by Glu1095, Asp1236, and Glu1239.

The protein belongs to the helicase family. Dicer subfamily. It depends on Mg(2+) as a cofactor. Mn(2+) serves as cofactor.

In terms of biological role, dicer-like endonuclease involved in cleaving double-stranded RNA in the RNA interference (RNAi) pathway. Produces 21 to 25 bp dsRNAs (siRNAs) which target the selective destruction of homologous RNAs leading to sequence-specific suppression of gene expression, called post-transcriptional gene silencing (PTGS). Part of a broad host defense response against viral infection and transposons. This chain is Dicer-like protein 2 (dcl2), found in Emericella nidulans (strain FGSC A4 / ATCC 38163 / CBS 112.46 / NRRL 194 / M139) (Aspergillus nidulans).